Consider the following 316-residue polypeptide: Probable cell division protein WhiA (316 aa).

The segment at residues 280 to 313 (SLKELGEMLEPPVGKSGVNHRLRKIEKIAEELRT) is a DNA-binding region (H-T-H motif).

Belongs to the WhiA family.

In terms of biological role, involved in cell division and chromosome segregation. In Clostridium perfringens (strain ATCC 13124 / DSM 756 / JCM 1290 / NCIMB 6125 / NCTC 8237 / Type A), this protein is Probable cell division protein WhiA.